The following is a 693-amino-acid chain: Protein arginine N-methyltransferase 7 (693 aa).

SAM-dependent MTase PRMT-type domains follow at residues 14–345 (SLEW…YCVW) and 358–684 (SAYQ…ITME). Omega-N-methylarginine is present on R32. Catalysis depends on residues E144 and E153.

The protein belongs to the class I-like SAM-binding methyltransferase superfamily. Protein arginine N-methyltransferase family. PRMT7 subfamily. As to quaternary structure, homodimer and heterodimer. Interacts with CTCFL, PRMT5 and SNRPD3.

It is found in the cytoplasm. The protein localises to the cytosol. It localises to the nucleus. The catalysed reaction is L-arginyl-[protein] + S-adenosyl-L-methionine = N(omega)-methyl-L-arginyl-[protein] + S-adenosyl-L-homocysteine + H(+). Functionally, arginine methyltransferase that can both catalyze the formation of omega-N monomethylarginine (MMA) and symmetrical dimethylarginine (sDMA), with a preference for the formation of MMA. Specifically mediates the symmetrical dimethylation of arginine residues in the small nuclear ribonucleoproteins Sm D1 (SNRPD1) and Sm D3 (SNRPD3); such methylation being required for the assembly and biogenesis of snRNP core particles. Specifically mediates the symmetric dimethylation of histone H4 'Arg-3' to form H4R3me2s. Plays a role in gene imprinting by being recruited by CTCFL at the H19 imprinted control region (ICR) and methylating histone H4 to form H4R3me2s, possibly leading to recruit DNA methyltransferases at these sites. May also play a role in embryonic stem cell (ESC) pluripotency. Also able to mediate the arginine methylation of histone H2A and myelin basic protein (MBP) in vitro; the relevance of such results is however unclear in vivo. This chain is Protein arginine N-methyltransferase 7 (Prmt7), found in Rattus norvegicus (Rat).